Consider the following 466-residue polypeptide: Ribulose bisphosphate carboxylase large chain (466 aa).

At Lys5 the chain carries N6,N6,N6-trimethyllysine. 2 residues coordinate substrate: Asn114 and Thr164. Lys166 acts as the Proton acceptor in catalysis. A substrate-binding site is contributed by Lys168. Residues Lys192, Asp194, and Glu195 each contribute to the Mg(2+) site. Lys192 is subject to N6-carboxylysine. Catalysis depends on His285, which acts as the Proton acceptor. The substrate site is built by Arg286, His318, and Ser370.

The protein belongs to the RuBisCO large chain family. Type I subfamily. As to quaternary structure, heterohexadecamer of 8 large chains and 8 small chains; disulfide-linked. The disulfide link is formed within the large subunit homodimers. Mg(2+) serves as cofactor. Post-translationally, the disulfide bond which can form in the large chain dimeric partners within the hexadecamer appears to be associated with oxidative stress and protein turnover.

It localises to the plastid. The protein localises to the chloroplast. The enzyme catalyses 2 (2R)-3-phosphoglycerate + 2 H(+) = D-ribulose 1,5-bisphosphate + CO2 + H2O. It catalyses the reaction D-ribulose 1,5-bisphosphate + O2 = 2-phosphoglycolate + (2R)-3-phosphoglycerate + 2 H(+). Functionally, ruBisCO catalyzes two reactions: the carboxylation of D-ribulose 1,5-bisphosphate, the primary event in carbon dioxide fixation, as well as the oxidative fragmentation of the pentose substrate in the photorespiration process. Both reactions occur simultaneously and in competition at the same active site. In Moringa oleifera (Horseradish tree), this protein is Ribulose bisphosphate carboxylase large chain.